We begin with the raw amino-acid sequence, 243 residues long: Carboxy-S-adenosyl-L-methionine synthase (243 aa).

S-adenosyl-L-methionine-binding positions include tyrosine 40, 65–67 (GCS), 90–91 (DN), 118–119 (DI), asparagine 133, and arginine 200.

This sequence belongs to the class I-like SAM-binding methyltransferase superfamily. Cx-SAM synthase family. Homodimer.

It carries out the reaction prephenate + S-adenosyl-L-methionine = carboxy-S-adenosyl-L-methionine + 3-phenylpyruvate + H2O. Functionally, catalyzes the conversion of S-adenosyl-L-methionine (SAM) to carboxy-S-adenosyl-L-methionine (Cx-SAM). The protein is Carboxy-S-adenosyl-L-methionine synthase of Shewanella oneidensis (strain ATCC 700550 / JCM 31522 / CIP 106686 / LMG 19005 / NCIMB 14063 / MR-1).